Here is a 152-residue protein sequence, read N- to C-terminus: Ribosome maturation factor RimP (152 aa).

This sequence belongs to the RimP family.

The protein localises to the cytoplasm. In terms of biological role, required for maturation of 30S ribosomal subunits. The polypeptide is Ribosome maturation factor RimP (Pseudothermotoga lettingae (strain ATCC BAA-301 / DSM 14385 / NBRC 107922 / TMO) (Thermotoga lettingae)).